The primary structure comprises 549 residues: uncharacterized protein (549 aa).

The N-terminal stretch at 1–19 is a signal peptide; the sequence is MNWRRIVWLLALVTLPTLA.

This is an uncharacterized protein from Escherichia coli (strain K12).